Consider the following 214-residue polypeptide: Phosphatidylserine decarboxylase proenzyme (214 aa).

The active-site Schiff-base intermediate with substrate; via pyruvic acid is the Ser-182. Residue Ser-182 is modified to Pyruvic acid (Ser); by autocatalysis.

Belongs to the phosphatidylserine decarboxylase family. PSD-A subfamily. As to quaternary structure, heterodimer of a large membrane-associated beta subunit and a small pyruvoyl-containing alpha subunit. Pyruvate serves as cofactor. In terms of processing, is synthesized initially as an inactive proenzyme. Formation of the active enzyme involves a self-maturation process in which the active site pyruvoyl group is generated from an internal serine residue via an autocatalytic post-translational modification. Two non-identical subunits are generated from the proenzyme in this reaction, and the pyruvate is formed at the N-terminus of the alpha chain, which is derived from the carboxyl end of the proenzyme. The post-translation cleavage follows an unusual pathway, termed non-hydrolytic serinolysis, in which the side chain hydroxyl group of the serine supplies its oxygen atom to form the C-terminus of the beta chain, while the remainder of the serine residue undergoes an oxidative deamination to produce ammonia and the pyruvoyl prosthetic group on the alpha chain.

It localises to the cell membrane. The enzyme catalyses a 1,2-diacyl-sn-glycero-3-phospho-L-serine + H(+) = a 1,2-diacyl-sn-glycero-3-phosphoethanolamine + CO2. Its pathway is phospholipid metabolism; phosphatidylethanolamine biosynthesis; phosphatidylethanolamine from CDP-diacylglycerol: step 2/2. Functionally, catalyzes the formation of phosphatidylethanolamine (PtdEtn) from phosphatidylserine (PtdSer). The chain is Phosphatidylserine decarboxylase proenzyme from Solidesulfovibrio magneticus (strain ATCC 700980 / DSM 13731 / RS-1) (Desulfovibrio magneticus).